We begin with the raw amino-acid sequence, 420 residues long: Phosphatidylinositol 5-phosphate 4-kinase type-2 gamma (420 aa).

An N-acetylalanine modification is found at alanine 2. Phosphoserine is present on serine 26. Positions 43 to 419 (AADPLVGVFL…RFLDFISNIF (377 aa)) constitute a PIPK domain. The interval 69 to 75 (VMLLPDD) is required for interaction with PIP5K1A. The residue at position 349 (serine 349) is a Phosphoserine.

In terms of assembly, interacts with PIP5K1A; the interaction inhibits PIP5K1A kinase activity. Post-translationally, phosphorylated, phosphorylation is induced by EGF. Widely expressed, with the most abundant expression in kidney.

It localises to the endoplasmic reticulum. The protein localises to the cytoplasm. The enzyme catalyses a 1,2-diacyl-sn-glycero-3-phospho-(1D-myo-inositol-5-phosphate) + ATP = a 1,2-diacyl-sn-glycero-3-phospho-(1D-myo-inositol-4,5-bisphosphate) + ADP + H(+). It carries out the reaction 1,2-dihexadecanoyl-sn-glycero-3-phospho-(1D-myo-inositol-5-phosphate) + ATP = 1,2-dihexadecanoyl-sn-glycero-3-phospho-(1D-myo-inositol-4,5-bisphosphate) + ADP + H(+). It catalyses the reaction 1,2-dihexadecanoyl-sn-glycero-3-phospho-(1D-myo-inositol-5-phosphate) + GTP = 1,2-dihexadecanoyl-sn-glycero-3-phospho-(1D-myo-inositol-4,5-bisphosphate) + GDP + H(+). Its function is as follows. Phosphatidylinositol 5-phosphate 4-kinase with low enzymatic activity. May be a GTP sensor, has higher GTP-dependent kinase activity than ATP-dependent kinase activity. PIP4Ks negatively regulate insulin signaling through a catalytic-independent mechanism. They interact with PIP5Ks and suppress PIP5K-mediated PtdIns(4,5)P2 synthesis and insulin-dependent conversion to PtdIns(3,4,5)P3. This is Phosphatidylinositol 5-phosphate 4-kinase type-2 gamma from Rattus norvegicus (Rat).